Here is a 459-residue protein sequence, read N- to C-terminus: Chromosomal replication initiator protein DnaA (459 aa).

The domain I, interacts with DnaA modulators stretch occupies residues 1 to 83 (MKNAREIWRN…NKLEIHFIEE (83 aa)). Residues 83–121 (ESQAHKYAPADGSSNESIAVTETKEQPVLLPSKEEGDLG) form a domain II region. The segment at 122–338 (QLNDKYIFET…GALTRVVAYA (217 aa)) is domain III, AAA+ region. Gly166, Gly168, Lys169, and Thr170 together coordinate ATP. The interval 339–459 (KLVGRPIDPD…IQTLKKALSN (121 aa)) is domain IV, binds dsDNA.

Belongs to the DnaA family. As to quaternary structure, oligomerizes as a right-handed, spiral filament on DNA at oriC.

The protein resides in the cytoplasm. Its function is as follows. Plays an essential role in the initiation and regulation of chromosomal replication. ATP-DnaA binds to the origin of replication (oriC) to initiate formation of the DNA replication initiation complex once per cell cycle. Binds the DnaA box (a 9 base pair repeat at the origin) and separates the double-stranded (ds)DNA. Forms a right-handed helical filament on oriC DNA; dsDNA binds to the exterior of the filament while single-stranded (ss)DNA is stabiized in the filament's interior. The ATP-DnaA-oriC complex binds and stabilizes one strand of the AT-rich DNA unwinding element (DUE), permitting loading of DNA polymerase. After initiation quickly degrades to an ADP-DnaA complex that is not apt for DNA replication. Binds acidic phospholipids. The protein is Chromosomal replication initiator protein DnaA of Exiguobacterium sp. (strain ATCC BAA-1283 / AT1b).